The following is a 319-amino-acid chain: tRNA U34 carboxymethyltransferase (319 aa).

Carboxy-S-adenosyl-L-methionine is bound by residues Lys-88, Trp-102, Lys-107, Gly-126, 176–177 (LE), Met-192, Tyr-196, and Arg-311.

This sequence belongs to the class I-like SAM-binding methyltransferase superfamily. CmoB family. Homotetramer.

It catalyses the reaction carboxy-S-adenosyl-L-methionine + 5-hydroxyuridine(34) in tRNA = 5-carboxymethoxyuridine(34) in tRNA + S-adenosyl-L-homocysteine + H(+). In terms of biological role, catalyzes carboxymethyl transfer from carboxy-S-adenosyl-L-methionine (Cx-SAM) to 5-hydroxyuridine (ho5U) to form 5-carboxymethoxyuridine (cmo5U) at position 34 in tRNAs. The sequence is that of tRNA U34 carboxymethyltransferase from Pseudomonas syringae pv. tomato (strain ATCC BAA-871 / DC3000).